Here is a 166-residue protein sequence, read N- to C-terminus: Bacterial non-heme ferritin (166 aa).

The Ferritin-like diiron domain maps to Leu-2–Gly-145. 5 residues coordinate Fe cation: Glu-17, Glu-50, His-53, Glu-94, and Gln-127.

This sequence belongs to the ferritin family. Prokaryotic subfamily.

It localises to the cytoplasm. The catalysed reaction is 4 Fe(2+) + O2 + 6 H2O = 4 iron(III) oxide-hydroxide + 12 H(+). Its function is as follows. Iron-storage protein. In Staphylococcus aureus (strain USA300), this protein is Bacterial non-heme ferritin (ftnA).